The sequence spans 340 residues: Uroporphyrinogen decarboxylase (340 aa).

Residues 21 to 25 (RQAGR), D71, Y148, S203, and H316 contribute to the substrate site.

Belongs to the uroporphyrinogen decarboxylase family. In terms of assembly, homodimer.

It localises to the cytoplasm. The catalysed reaction is uroporphyrinogen III + 4 H(+) = coproporphyrinogen III + 4 CO2. It participates in porphyrin-containing compound metabolism; protoporphyrin-IX biosynthesis; coproporphyrinogen-III from 5-aminolevulinate: step 4/4. Its function is as follows. Catalyzes the decarboxylation of four acetate groups of uroporphyrinogen-III to yield coproporphyrinogen-III. This Campylobacter concisus (strain 13826) protein is Uroporphyrinogen decarboxylase.